Consider the following 880-residue polypeptide: Valine--tRNA ligase (880 aa).

A 'HIGH' region motif is present at residues 49–59 (PNVTGKLHLGH). Positions 525–529 (KMSKS) match the 'KMSKS' region motif. Lys528 is an ATP binding site. Residues 809–879 (LAGLLDLEEE…AVRARIKELK (71 aa)) are a coiled coil.

This sequence belongs to the class-I aminoacyl-tRNA synthetase family. ValS type 1 subfamily. Monomer.

The protein resides in the cytoplasm. It catalyses the reaction tRNA(Val) + L-valine + ATP = L-valyl-tRNA(Val) + AMP + diphosphate. Functionally, catalyzes the attachment of valine to tRNA(Val). As ValRS can inadvertently accommodate and process structurally similar amino acids such as threonine, to avoid such errors, it has a 'posttransfer' editing activity that hydrolyzes mischarged Thr-tRNA(Val) in a tRNA-dependent manner. The polypeptide is Valine--tRNA ligase (Halalkalibacterium halodurans (strain ATCC BAA-125 / DSM 18197 / FERM 7344 / JCM 9153 / C-125) (Bacillus halodurans)).